We begin with the raw amino-acid sequence, 229 residues long: Small ribosomal subunit protein uS3 (229 aa).

The region spanning Val39–Arg107 is the KH type-2 domain.

It belongs to the universal ribosomal protein uS3 family. As to quaternary structure, part of the 30S ribosomal subunit. Forms a tight complex with proteins S10 and S14.

Binds the lower part of the 30S subunit head. Binds mRNA in the 70S ribosome, positioning it for translation. The chain is Small ribosomal subunit protein uS3 from Shewanella frigidimarina (strain NCIMB 400).